Consider the following 263-residue polypeptide: uncharacterized protein (263 aa).

This is an uncharacterized protein from Mycobacterium tuberculosis (strain CDC 1551 / Oshkosh).